A 361-amino-acid polypeptide reads, in one-letter code: C3a anaphylatoxin chemotactic receptor (361 aa).

The Extracellular portion of the chain corresponds to 1-64; it reads MQQETQAPPL…FASSEVRVIS (64 aa). Asn-36 and Asn-50 each carry an N-linked (GlcNAc...) asparagine glycan. Residues 65–85 form a helical membrane-spanning segment; it reads LVVYCLTFLLGVPGNSFVIFI. Residues 86–96 lie on the Cytoplasmic side of the membrane; that stretch reads AGMKMKRTVNT. The helical transmembrane segment at 97–117 threads the bilayer; the sequence is IWFLNLATADLLCCLSVPLTV. The Extracellular portion of the chain corresponds to 118–134; sequence AEILLDHHWPYGYAMCK. Cysteines 133 and 210 form a disulfide. The helical transmembrane segment at 135 to 155 threads the bilayer; the sequence is ILPSVIVISMFASVFTLNIIS. The Cytoplasmic portion of the chain corresponds to 156–177; it reads LDRFTQVITPVWAQNHRSLLLA. A helical membrane pass occupies residues 178–198; it reads RLSCVAVWILALLLSLPFMIL. At 199 to 224 the chain is on the extracellular side; that stretch reads RRTYEEFNMTVCTFDDDDFTTYGALS. Residues 225-245 form a helical membrane-spanning segment; that stretch reads IVRFVFGFLIPLMSIVTCYGI. Residues 246-262 lie on the Cytoplasmic side of the membrane; that stretch reads IARKLGSRHFRSGRAFR. The chain crosses the membrane as a helical span at residues 263–283; the sequence is IMLAVIVAFFLCWMPYHVLDL. The Extracellular segment spans residues 284 to 301; the sequence is IRSYGGESSSMVALKVDP. A helical transmembrane segment spans residues 302–322; the sequence is LAISLAYVNSCLNPVLYVFMG. Residues 323–361 are Cytoplasmic-facing; the sequence is QDFKNKVQLSLRRVFERAFSEEGTQISRSTQSQQVHSVL.

It belongs to the G-protein coupled receptor 1 family.

It localises to the cell membrane. In terms of biological role, receptor for the chemotactic and inflammatory peptide anaphylatoxin C3a. This receptor stimulates chemotaxis, granule enzyme release and superoxide anion production. The chain is C3a anaphylatoxin chemotactic receptor (c3ar1) from Danio rerio (Zebrafish).